The primary structure comprises 142 residues: Peptide methionine sulfoxide reductase MsrB (142 aa).

The region spanning 10–132 is the MsrB domain; the sequence is EEEWKKVLTP…NSVSLNFKTE (123 aa). The Zn(2+) site is built by C49, C52, C98, and C101. The Nucleophile role is filled by C121.

This sequence belongs to the MsrB Met sulfoxide reductase family. Requires Zn(2+) as cofactor.

It carries out the reaction L-methionyl-[protein] + [thioredoxin]-disulfide + H2O = L-methionyl-(R)-S-oxide-[protein] + [thioredoxin]-dithiol. In Methanosarcina barkeri (strain Fusaro / DSM 804), this protein is Peptide methionine sulfoxide reductase MsrB.